Consider the following 264-residue polypeptide: Thymidylate synthase (264 aa).

Position 21 (Arg21) interacts with dUMP. His51 lines the (6R)-5,10-methylene-5,6,7,8-tetrahydrofolate pocket. 126-127 (RR) serves as a coordination point for dUMP. The Nucleophile role is filled by Cys146. DUMP contacts are provided by residues 166 to 169 (RSCD), Asn177, and 207 to 209 (HLY). Asp169 provides a ligand contact to (6R)-5,10-methylene-5,6,7,8-tetrahydrofolate. (6R)-5,10-methylene-5,6,7,8-tetrahydrofolate is bound at residue Ala263.

It belongs to the thymidylate synthase family. Bacterial-type ThyA subfamily. As to quaternary structure, homodimer.

Its subcellular location is the cytoplasm. It catalyses the reaction dUMP + (6R)-5,10-methylene-5,6,7,8-tetrahydrofolate = 7,8-dihydrofolate + dTMP. It functions in the pathway pyrimidine metabolism; dTTP biosynthesis. Catalyzes the reductive methylation of 2'-deoxyuridine-5'-monophosphate (dUMP) to 2'-deoxythymidine-5'-monophosphate (dTMP) while utilizing 5,10-methylenetetrahydrofolate (mTHF) as the methyl donor and reductant in the reaction, yielding dihydrofolate (DHF) as a by-product. This enzymatic reaction provides an intracellular de novo source of dTMP, an essential precursor for DNA biosynthesis. This Shewanella denitrificans (strain OS217 / ATCC BAA-1090 / DSM 15013) protein is Thymidylate synthase.